We begin with the raw amino-acid sequence, 228 residues long: General odorant-binding protein 71 (228 aa).

The first 20 residues, 1 to 20, serve as a signal peptide directing secretion; the sequence is MCGAIVLLLLVGTSPAPVEG. The interval 50-131 is disordered; it reads TMGEWGQRDR…GNSSSSSSST (82 aa). The span at 55–72 shows a compositional bias: basic and acidic residues; sequence GQRDRNGEEQQMMRDYGR. Positions 83–99 are enriched in low complexity; that stretch reads GGQTSGSSSSGSAGEHS. Residues 111 to 120 are compositionally biased toward gly residues; it reads AGQGGNGTRS. Over residues 121-131 the composition is skewed to low complexity; the sequence is GGNSSSSSSST. Cystine bridges form between cysteine 138–cysteine 199 and cysteine 185–cysteine 208.

It belongs to the PBP/GOBP family.

Its subcellular location is the secreted. In terms of biological role, present in the aqueous fluid surrounding olfactory sensory dendrites and are thought to aid in the capture and transport of hydrophobic odorants into and through this fluid. The polypeptide is General odorant-binding protein 71 (Obp71) (Anopheles gambiae (African malaria mosquito)).